The primary structure comprises 311 residues: p-hydroxybenzoic acid efflux pump subunit AaeA (311 aa).

Residues Val-11 to Phe-31 form a helical membrane-spanning segment.

This sequence belongs to the membrane fusion protein (MFP) (TC 8.A.1) family.

Its subcellular location is the cell inner membrane. Forms an efflux pump with AaeB. This chain is p-hydroxybenzoic acid efflux pump subunit AaeA, found in Yersinia pestis bv. Antiqua (strain Antiqua).